The chain runs to 823 residues: Zygotic DNA replication licensing factor mcm6 (823 aa).

The C4-type zinc-finger motif lies at 159–186; the sequence is CLDCQTLVRDVEQQFKYTQPSICRNPVC. One can recognise an MCM domain in the interval 347-554; sequence LYHNLCTSLF…TDYAIARRIV (208 aa). 397-404 provides a ligand contact to ATP; that stretch reads GDPSTAKS. Residues 529–532 carry the Arginine finger motif; that stretch reads SRFD. The tract at residues 666 to 713 is disordered; it reads NLDQEDEHEAEEEPQEVINGDASVPSGVNGHVNGMNGHAEEPNAATPK. Over residues 667–680 the composition is skewed to acidic residues; it reads LDQEDEHEAEEEPQ. A compositionally biased stretch (low complexity) spans 692–702; the sequence is GVNGHVNGMNG.

The protein belongs to the MCM family. As to quaternary structure, component of the mcm2-7 complex (RLF-M). The complex forms a toroidal hexameric ring with the proposed subunit order mcm2-mcm6-mcm4-mcm7-mcm3-mcm5. Begins to associate with zmcm3, mcm4 and mcm7 into mcm complexes at the neurula stage.

Its subcellular location is the nucleus. It carries out the reaction ATP + H2O = ADP + phosphate + H(+). Its function is as follows. Acts as a component of the mcm2-7 complex (mcm complex) which is the putative replicative helicase essential for 'once per cell cycle' DNA replication initiation and elongation in eukaryotic cells. The active ATPase sites in the mcm2-7 ring are formed through the interaction surfaces of two neighboring subunits such that a critical structure of a conserved arginine finger motif is provided in trans relative to the ATP-binding site of the Walker A box of the adjacent subunit. The six ATPase active sites, however, are likely to contribute differentially to the complex helicase activity. The existence of maternal and zygotic forms of mcm3 and mcm6 suggests that specific forms of mcm2-7 complexes may be used during different stages of development. May replace mmcm6 in the mcm2-7 complex. This Xenopus tropicalis (Western clawed frog) protein is Zygotic DNA replication licensing factor mcm6.